A 750-amino-acid polypeptide reads, in one-letter code: Ribosomal RNA large subunit methyltransferase K/L (750 aa).

One can recognise a THUMP domain in the interval 46 to 157 (TAYRLCLWSR…RGEAILSLDL (112 aa)).

It belongs to the methyltransferase superfamily. RlmKL family.

It localises to the cytoplasm. It carries out the reaction guanosine(2445) in 23S rRNA + S-adenosyl-L-methionine = N(2)-methylguanosine(2445) in 23S rRNA + S-adenosyl-L-homocysteine + H(+). It catalyses the reaction guanosine(2069) in 23S rRNA + S-adenosyl-L-methionine = N(2)-methylguanosine(2069) in 23S rRNA + S-adenosyl-L-homocysteine + H(+). Its function is as follows. Specifically methylates the guanine in position 2445 (m2G2445) and the guanine in position 2069 (m7G2069) of 23S rRNA. The sequence is that of Ribosomal RNA large subunit methyltransferase K/L from Pseudomonas savastanoi pv. phaseolicola (strain 1448A / Race 6) (Pseudomonas syringae pv. phaseolicola (strain 1448A / Race 6)).